A 444-amino-acid chain; its full sequence is Glutamate--tRNA ligase 1 (444 aa).

Residues 8–18 (PSPTGFLHVGN) carry the 'HIGH' region motif. A 'KMSKS' region motif is present at residues 239–243 (KISKR). ATP is bound at residue lysine 242.

Belongs to the class-I aminoacyl-tRNA synthetase family. Glutamate--tRNA ligase type 1 subfamily. As to quaternary structure, monomer.

Its subcellular location is the cytoplasm. It carries out the reaction tRNA(Glu) + L-glutamate + ATP = L-glutamyl-tRNA(Glu) + AMP + diphosphate. In terms of biological role, catalyzes the attachment of glutamate to tRNA(Glu) in a two-step reaction: glutamate is first activated by ATP to form Glu-AMP and then transferred to the acceptor end of tRNA(Glu). The protein is Glutamate--tRNA ligase 1 of Zymomonas mobilis subsp. mobilis (strain ATCC 31821 / ZM4 / CP4).